A 488-amino-acid polypeptide reads, in one-letter code: Malonate-semialdehyde dehydrogenase (488 aa).

NAD(+) contacts are provided by Ala-150, Phe-152, Lys-176, Glu-179, Arg-180, Ser-229, and Thr-251. Residue Cys-284 is the Nucleophile of the active site. Residue Glu-382 participates in NAD(+) binding.

The protein belongs to the aldehyde dehydrogenase family. IolA subfamily. In terms of assembly, homotetramer.

The enzyme catalyses 3-oxopropanoate + NAD(+) + CoA + H2O = hydrogencarbonate + acetyl-CoA + NADH + H(+). It carries out the reaction 2-methyl-3-oxopropanoate + NAD(+) + CoA + H2O = propanoyl-CoA + hydrogencarbonate + NADH + H(+). It participates in polyol metabolism; myo-inositol degradation into acetyl-CoA; acetyl-CoA from myo-inositol: step 7/7. In terms of biological role, catalyzes the oxidation of malonate semialdehyde (MSA) and methylmalonate semialdehyde (MMSA) into acetyl-CoA and propanoyl-CoA, respectively. Is involved in a myo-inositol catabolic pathway. Bicarbonate, and not CO2, is the end-product of the enzymatic reaction. This is Malonate-semialdehyde dehydrogenase from Listeria monocytogenes serotype 4a (strain HCC23).